Here is a 1131-residue protein sequence, read N- to C-terminus: PolyA-specific ribonuclease subunit panl-2 (1131 aa).

Residues 489–864 form the USP domain; sequence VTMQSTHGMN…LPALLAYKKK (376 aa). Residues 909–1074 enclose the Exonuclease domain; it reads VGLDAEFIKI…VDARYALKLY (166 aa). Residues 1104 to 1115 are compositionally biased toward polar residues; the sequence is QTSSPLVVSTTR. Residues 1104-1131 form a disordered region; that stretch reads QTSSPLVVSTTRKTPEDTNPADAAPKSV.

The polypeptide is PolyA-specific ribonuclease subunit panl-2 (Caenorhabditis elegans).